A 225-amino-acid chain; its full sequence is UPF0758 protein MADE_1000235 (225 aa).

In terms of domain architecture, MPN spans Val-102–Leu-224. His-173, His-175, and Asp-186 together coordinate Zn(2+). Residues His-173–Asp-186 carry the JAMM motif motif.

The protein belongs to the UPF0758 family.

The chain is UPF0758 protein MADE_1000235 from Alteromonas mediterranea (strain DSM 17117 / CIP 110805 / LMG 28347 / Deep ecotype).